A 179-amino-acid polypeptide reads, in one-letter code: Large ribosomal subunit protein uL6 (179 aa).

It belongs to the universal ribosomal protein uL6 family. As to quaternary structure, part of the 50S ribosomal subunit.

Its function is as follows. This protein binds to the 23S rRNA, and is important in its secondary structure. It is located near the subunit interface in the base of the L7/L12 stalk, and near the tRNA binding site of the peptidyltransferase center. In Alkaliphilus metalliredigens (strain QYMF), this protein is Large ribosomal subunit protein uL6.